We begin with the raw amino-acid sequence, 65 residues long: Putative beta-neurotoxin RjAa7 (65 aa).

In terms of domain architecture, LCN-type CS-alpha/beta spans 1 to 64 (KEGYPVGRDG…VWDSSTNKCG (64 aa)). 4 disulfides stabilise this stretch: Cys11-Cys63, Cys15-Cys37, Cys22-Cys44, and Cys26-Cys46.

The protein belongs to the long (4 C-C) scorpion toxin superfamily. Sodium channel inhibitor family. Beta subfamily. As to expression, expressed by the venom gland.

It is found in the secreted. In terms of biological role, beta toxins bind voltage-independently at site-4 of sodium channels (Nav) and shift the voltage of activation toward more negative potentials thereby affecting sodium channel activation and promoting spontaneous and repetitive firing. This chain is Putative beta-neurotoxin RjAa7, found in Rhopalurus junceus (Caribbean blue scorpion).